The following is a 541-amino-acid chain: MKLSCLVFLIVSSLVSSSLATAPPNTSIYESFLQCFSNQTGAPPEKLCDVVLPQSSASFTPTLRAYIRNARFNTSTSPKPLLVIAARSECHVQATVLCTKSLNFQLKTRSGGHDYDGVSYISNRPFFVLDMSYLRNITVDMSDDGGSAWVGAGATLGEVYYNIWQSSKTHGTHGFPAGVCPTVGAGGHISGGGYGNMIRKYGLSVDYVTDAKIVDVNGRILDRKSMGEDLFWAIGGGGGASFGVILSFKIKLVPVPPRVTVFRVEKTLVENALDMVHKWQFVAPKTSPDLFMRLMLQPVTRNTTQTVRASVVALFLGKQSDLMSLLTKEFPELGLKPENCTEMTWIQSVMWWANNDNATVIKPEILLDRNPDSASFLKRKSDYVEKEISKDGLDFLCKKLMEAGKLGLVFNPYGGKMSEVATTATPFPHRKRLFKVQHSMNWKDPGTDVESSFMEKTRSFYSYMAPFVTKNPRHTYLNYRDLDIGINSHGPNSYREAEVYGRKYFGENFDRLVKVKTAVDPENFFRDEQSIPTLPTKPSSS.

An N-terminal signal peptide occupies residues 1–20 (MKLSCLVFLIVSSLVSSSLA). 7 N-linked (GlcNAc...) asparagine glycosylation sites follow: Asn-25, Asn-38, Asn-73, Asn-136, Asn-302, Asn-339, and Asn-357. A disulfide bridge connects residues Cys-35 and Cys-98. The FAD-binding PCMH-type domain occupies 76 to 255 (TSPKPLLVIA…LSFKIKLVPV (180 aa)). The 6-(S-cysteinyl)-8alpha-(pros-histidyl)-FAD (His-Cys) cross-link spans 113–180 (HDYDGVSYIS…GTHGFPAGVC (68 aa)).

Belongs to the oxygen-dependent FAD-linked oxidoreductase family. FAD serves as cofactor. The FAD cofactor is bound via a bicovalent 6-S-cysteinyl, 8alpha-N1-histidyl FAD linkage. Accumulates in cell walls of etiolated hypocotyls.

The protein localises to the secreted. It is found in the cell wall. The chain is Berberine bridge enzyme-like 1 from Arabidopsis thaliana (Mouse-ear cress).